A 322-amino-acid chain; its full sequence is Ribose-phosphate pyrophosphokinase (322 aa).

ATP is bound by residues 43 to 45 (DGE) and 102 to 103 (RQ). Positions 137 and 177 each coordinate Mg(2+). Lys-201 is an active-site residue. D-ribose 5-phosphate contacts are provided by residues Arg-203, Asp-227, and 231 to 235 (DTAGT).

Belongs to the ribose-phosphate pyrophosphokinase family. Class I subfamily. As to quaternary structure, homohexamer. Mg(2+) serves as cofactor.

The protein resides in the cytoplasm. It carries out the reaction D-ribose 5-phosphate + ATP = 5-phospho-alpha-D-ribose 1-diphosphate + AMP + H(+). Its pathway is metabolic intermediate biosynthesis; 5-phospho-alpha-D-ribose 1-diphosphate biosynthesis; 5-phospho-alpha-D-ribose 1-diphosphate from D-ribose 5-phosphate (route I): step 1/1. Involved in the biosynthesis of the central metabolite phospho-alpha-D-ribosyl-1-pyrophosphate (PRPP) via the transfer of pyrophosphoryl group from ATP to 1-hydroxyl of ribose-5-phosphate (Rib-5-P). This is Ribose-phosphate pyrophosphokinase from Xylella fastidiosa (strain Temecula1 / ATCC 700964).